The following is a 437-amino-acid chain: Acyl-coenzyme A thioesterase 9, mitochondrial (437 aa).

A mitochondrion-targeting transit peptide spans 1–21 (MRRAALRLCTLSKGLLAPSRG). 2 consecutive HotDog ACOT-type domains span residues 84 to 207 (SYIE…RDSE) and 287 to 399 (ENSK…EKEV). Lys-101 carries the post-translational modification N6-acetyllysine.

This sequence belongs to the acyl coenzyme A hydrolase family. As to quaternary structure, interacts with NYAP1, NYAP2 and MYO16.

It localises to the mitochondrion. It is found in the mitochondrion matrix. Its subcellular location is the mitochondrion inner membrane. The catalysed reaction is butanoyl-CoA + H2O = butanoate + CoA + H(+). The enzyme catalyses propanoyl-CoA + H2O = propanoate + CoA + H(+). It carries out the reaction hexadecanoyl-CoA + H2O = hexadecanoate + CoA + H(+). It catalyses the reaction octanoyl-CoA + H2O = octanoate + CoA + H(+). The catalysed reaction is decanoyl-CoA + H2O = decanoate + CoA + H(+). The enzyme catalyses tetradecanoyl-CoA + H2O = tetradecanoate + CoA + H(+). It carries out the reaction 4,8-dimethylnonanoyl-CoA + H2O = 4,8-dimethylnonanoate + CoA + H(+). It catalyses the reaction 3-methylbutanoyl-CoA + H2O = 3-methylbutanoate + CoA + H(+). The catalysed reaction is 2-methylpropanoyl-CoA + H2O = 2-methylpropanoate + CoA + H(+). The protein operates within lipid metabolism; fatty acid metabolism. Strongly inhibited by NADH and CoA. Its function is as follows. Mitochondrial acyl-CoA thioesterase. Catalyzes the hydrolysis of acyl-CoAs into free fatty acids and coenzyme A (CoA), regulating their respective intracellular levels. Regulates both mitochondrial lipid and amino acid metabolism. This Bos taurus (Bovine) protein is Acyl-coenzyme A thioesterase 9, mitochondrial (ACOT9).